Reading from the N-terminus, the 109-residue chain is Putative double-stranded DNA mimic protein plu2488 (109 aa).

It belongs to the putative dsDNA mimic protein family.

In terms of biological role, may act as a double-stranded DNA (dsDNA) mimic. Probably regulates the activity of a dsDNA-binding protein. The polypeptide is Putative double-stranded DNA mimic protein plu2488 (Photorhabdus laumondii subsp. laumondii (strain DSM 15139 / CIP 105565 / TT01) (Photorhabdus luminescens subsp. laumondii)).